We begin with the raw amino-acid sequence, 451 residues long: Amino-acid acetyltransferase (451 aa).

The region spanning 305-451 is the N-acetyltransferase domain; it reads EYLREATLDD…RRSMVLMKKL (147 aa).

It belongs to the acetyltransferase family. ArgA subfamily.

Its subcellular location is the cytoplasm. The catalysed reaction is L-glutamate + acetyl-CoA = N-acetyl-L-glutamate + CoA + H(+). The protein operates within amino-acid biosynthesis; L-arginine biosynthesis; N(2)-acetyl-L-ornithine from L-glutamate: step 1/4. The protein is Amino-acid acetyltransferase (argA) of Ralstonia nicotianae (strain ATCC BAA-1114 / GMI1000) (Ralstonia solanacearum).